Consider the following 365-residue polypeptide: Probable L-tyrosine/L-aspartate decarboxylase (365 aa).

Lysine 224 is modified (N6-(pyridoxal phosphate)lysine).

This sequence belongs to the group II decarboxylase family. MfnA subfamily. Pyridoxal 5'-phosphate serves as cofactor.

The enzyme catalyses L-tyrosine + H(+) = tyramine + CO2. The catalysed reaction is L-aspartate + H(+) = beta-alanine + CO2. Its pathway is cofactor biosynthesis; methanofuran biosynthesis. The protein operates within cofactor biosynthesis; coenzyme A biosynthesis. In terms of biological role, catalyzes the decarboxylation of L-tyrosine to produce tyramine for methanofuran biosynthesis. Can also catalyze the decarboxylation of L-aspartate to produce beta-alanine for coenzyme A (CoA) biosynthesis. This is Probable L-tyrosine/L-aspartate decarboxylase from Methanoculleus marisnigri (strain ATCC 35101 / DSM 1498 / JR1).